The sequence spans 435 residues: Methylenetetrahydrofolate--tRNA-(uracil-5-)-methyltransferase TrmFO (435 aa).

9-14 is an FAD binding site; the sequence is GGGLAG.

Belongs to the MnmG family. TrmFO subfamily. It depends on FAD as a cofactor.

The protein localises to the cytoplasm. The enzyme catalyses uridine(54) in tRNA + (6R)-5,10-methylene-5,6,7,8-tetrahydrofolate + NADH + H(+) = 5-methyluridine(54) in tRNA + (6S)-5,6,7,8-tetrahydrofolate + NAD(+). The catalysed reaction is uridine(54) in tRNA + (6R)-5,10-methylene-5,6,7,8-tetrahydrofolate + NADPH + H(+) = 5-methyluridine(54) in tRNA + (6S)-5,6,7,8-tetrahydrofolate + NADP(+). Its function is as follows. Catalyzes the folate-dependent formation of 5-methyl-uridine at position 54 (M-5-U54) in all tRNAs. This is Methylenetetrahydrofolate--tRNA-(uracil-5-)-methyltransferase TrmFO from Geobacter sp. (strain M21).